The following is a 307-amino-acid chain: Peroxisomal protein PEX21 (307 aa).

Cys4 is covalently cross-linked (Glycyl cysteine thioester (Cys-Gly) (interchain with G-Cter in ubiquitin)). The segment at 23 to 52 is disordered; it reads VGRVGGFNRPSGGLGQSSAEQQLQARAGER.

The protein belongs to the peroxin-21 family. Interacts with PEX7. Monoubiquitinated at Cys-4; acts as a signal for PEX21 extraction and is required for proper export from peroxisomes and recycling.

The protein resides in the cytoplasm. It is found in the cytosol. Its subcellular location is the peroxisome. Functionally, mediates peroxisomal import of proteins containing a C-terminal PTS2-type peroxisomal targeting signal via its interaction with PEX7. Interaction with PEX7 only takes place when PEX7 is associated with cargo proteins containing a PTS2 peroxisomal targeting signal. PEX7 along with PTS2-containing cargo proteins are then translocated through the PEX13-PEX14 docking complex together with PEX21. The polypeptide is Peroxisomal protein PEX21 (PEX21) (Eremothecium gossypii (strain ATCC 10895 / CBS 109.51 / FGSC 9923 / NRRL Y-1056) (Yeast)).